Here is a 108-residue protein sequence, read N- to C-terminus: uncharacterized protein (108 aa).

This is an uncharacterized protein from Bacillus subtilis (strain 168).